A 414-amino-acid polypeptide reads, in one-letter code: Glucose-1-phosphate adenylyltransferase (414 aa).

Residues Tyr-103, Gly-168, Glu-183–Lys-184, and Ser-201 each bind alpha-D-glucose 1-phosphate.

It belongs to the bacterial/plant glucose-1-phosphate adenylyltransferase family. As to quaternary structure, homotetramer.

It carries out the reaction alpha-D-glucose 1-phosphate + ATP + H(+) = ADP-alpha-D-glucose + diphosphate. It functions in the pathway glycan biosynthesis; glycogen biosynthesis. Functionally, involved in the biosynthesis of ADP-glucose, a building block required for the elongation reactions to produce glycogen. Catalyzes the reaction between ATP and alpha-D-glucose 1-phosphate (G1P) to produce pyrophosphate and ADP-Glc. This chain is Glucose-1-phosphate adenylyltransferase, found in Thermus caldophilus.